The sequence spans 487 residues: MMTTPTLAPLTTADLAPLVPELVLIGGAFALLMLDLFVSQRNKVWTHLFSVAVLAVVLVLLATGTGGQGDIFNGMFVRDTAADVMKTVIVLVSGLSLVYGWTYLRERNLYQGEIPVLVLFATAGMMLLASAGSLLMVYLGLELLALCSYALVASNRDNGLATEAAMKYFVLGSLASGLLLYGMSLVYGATGTLSLAGIHDAIEGSNERTLLLTGTIFMIAGVAFKLGAAPFHMWLPDVYQGAPAPIALFISSAPKLAAFGMAYRLLEVGMGPLSPQWHLLIGGLSAVSLVVGNLMAIAQSNLKRMLAYSTVSHIGFLLMGVAGGGEEGYAAAMFYAVSYTIMSTASFGAIIALSRNGFEAENIDDFKGLNARNPWMAGLVLCIMASLAGIPPFLGFWTKLAVLGAAVKGDMLWLALVGVICAVIGAYYYLRVIKVMYFDEPVGEPLPANNDRVLGTVLGVNALALLALGLAWSPIMVWCQRAFAGLA.

Transmembrane regions (helical) follow at residues 18–38 (LVPELVLIGGAFALLMLDLFV), 44–64 (VWTHLFSVAVLAVVLVLLATG), 84–104 (VMKTVIVLVSGLSLVYGWTYL), 116–136 (VLVLFATAGMMLLASAGSLLM), 169–189 (FVLGSLASGLLLYGMSLVYGA), 211–231 (LLTGTIFMIAGVAFKLGAAPF), 242–262 (APAPIALFISSAPKLAAFGMA), 277–297 (WHLLIGGLSAVSLVVGNLMAI), 305–325 (MLAYSTVSHIGFLLMGVAGGG), 333–353 (MFYAVSYTIMSTASFGAIIAL), 377–397 (AGLVLCIMASLAGIPPFLGFW), 410–430 (DMLWLALVGVICAVIGAYYYL), and 457–477 (VLGVNALALLALGLAWSPIMV).

This sequence belongs to the complex I subunit 2 family. NDH-1 is composed of 14 different subunits. Subunits NuoA, H, J, K, L, M, N constitute the membrane sector of the complex.

Its subcellular location is the cell inner membrane. It carries out the reaction a quinone + NADH + 5 H(+)(in) = a quinol + NAD(+) + 4 H(+)(out). Functionally, NDH-1 shuttles electrons from NADH, via FMN and iron-sulfur (Fe-S) centers, to quinones in the respiratory chain. The immediate electron acceptor for the enzyme in this species is believed to be ubiquinone. Couples the redox reaction to proton translocation (for every two electrons transferred, four hydrogen ions are translocated across the cytoplasmic membrane), and thus conserves the redox energy in a proton gradient. The protein is NADH-quinone oxidoreductase subunit N of Xanthomonas euvesicatoria pv. vesicatoria (strain 85-10) (Xanthomonas campestris pv. vesicatoria).